A 358-amino-acid polypeptide reads, in one-letter code: UPF0324 membrane protein CT0845 (358 aa).

Transmembrane regions (helical) follow at residues 36–53 (YFPG…ATFL), 57–76 (YGAP…RFLS), 83–105 (LVGI…GMRI), 115–134 (VKPV…FGLA), 146–168 (GVLT…AAVL), 178–200 (TIFT…PVVA), 244–261 (LLRV…SLIF), 276–295 (LLPP…SLGV), 307–325 (VSRW…KTSL), and 335–357 (PVSI…VVWM).

The protein belongs to the UPF0324 family.

It is found in the cell membrane. This Chlorobaculum tepidum (strain ATCC 49652 / DSM 12025 / NBRC 103806 / TLS) (Chlorobium tepidum) protein is UPF0324 membrane protein CT0845.